The sequence spans 266 residues: uncharacterized protein (266 aa).

The signal sequence occupies residues 1–22 (MGYLKRLVLYIVIMVMSVFIIG). Residue cysteine 23 is the site of N-palmitoyl cysteine attachment. Cysteine 23 is lipidated: S-diacylglycerol cysteine.

It belongs to the staphylococcal tandem lipoprotein family.

Its subcellular location is the cell membrane. This is an uncharacterized protein from Staphylococcus aureus (strain USA300).